A 376-amino-acid chain; its full sequence is Chaperone protein DnaJ (376 aa).

The region spanning 5 to 70 (DYYEILGVSK…QKRAAYDQYG (66 aa)) is the J domain. The CR-type zinc finger occupies 131-209 (GVTKEIRIPT…CHGHGRVERS (79 aa)). Zn(2+) contacts are provided by Cys-144, Cys-147, Cys-161, Cys-164, Cys-183, Cys-186, Cys-197, and Cys-200. 4 CXXCXGXG motif repeats span residues 144–151 (CDVCHGSG), 161–168 (CPTCHGSG), 183–190 (CPHCQGRG), and 197–204 (CNKCHGHG).

Belongs to the DnaJ family. Homodimer. Zn(2+) is required as a cofactor.

The protein resides in the cytoplasm. Participates actively in the response to hyperosmotic and heat shock by preventing the aggregation of stress-denatured proteins and by disaggregating proteins, also in an autonomous, DnaK-independent fashion. Unfolded proteins bind initially to DnaJ; upon interaction with the DnaJ-bound protein, DnaK hydrolyzes its bound ATP, resulting in the formation of a stable complex. GrpE releases ADP from DnaK; ATP binding to DnaK triggers the release of the substrate protein, thus completing the reaction cycle. Several rounds of ATP-dependent interactions between DnaJ, DnaK and GrpE are required for fully efficient folding. Also involved, together with DnaK and GrpE, in the DNA replication of plasmids through activation of initiation proteins. This Escherichia fergusonii (strain ATCC 35469 / DSM 13698 / CCUG 18766 / IAM 14443 / JCM 21226 / LMG 7866 / NBRC 102419 / NCTC 12128 / CDC 0568-73) protein is Chaperone protein DnaJ.